Consider the following 63-residue polypeptide: Large ribosomal subunit protein uL30 (63 aa).

The protein belongs to the universal ribosomal protein uL30 family. Part of the 50S ribosomal subunit.

The protein is Large ribosomal subunit protein uL30 of Rickettsia akari (strain Hartford).